The primary structure comprises 64 residues: Temporin-ALf (64 aa).

Residues 1–22 (MFTLKKSLLLLFFLGTINLSLC) form the signal peptide. The propeptide occupies 23–46 (EQERNAEEERRDEPDERNAEVEKR). Leucine amide is present on leucine 62.

As to expression, expressed by the skin glands.

Its subcellular location is the secreted. Its function is as follows. Antimicrobial peptide with activity against Gram-positive and Gram-negative bacteria and against fungi. Has been tested against S.aureus (MIC=2.5 ug/mL), B.pumilus (MIC=5.0 ug/mL), B.cereus (MIC=30.0 ug/mL), E.coli (MIC=2.5 ug/mL), B.dysenteriae (MIC=5.0 ug/mL), A.cacoaceticus (MIC=30.0 ug/mL), P.aeruginosa (MIC=5.0 ug/mL) and C.albicans (MIC=2.5 ug/mL). Also shows a weak hemolytic activity. The sequence is that of Temporin-ALf from Amolops loloensis (Lolokou Sucker Frog).